Reading from the N-terminus, the 400-residue chain is Large envelope protein (400 aa).

The residue at position 1 (Met-1) is an N-acetylmethionine. Disordered stretches follow at residues 1-53 (MGGW…DHWP), 88-118 (VPVA…SHPQ), and 145-169 (GSSS…SRTG). Gly-2 carries N-myristoyl glycine; by host lipidation. Residues 2–119 (GGWSSKPRQG…PPLRDSHPQA (118 aa)) form a pre-S1 region. Positions 2-174 (GGWSSKPRQG…SSRTGDPAPN (173 aa)) are pre-S. Residues 2–181 (GGWSSKPRQG…APNMENTTSG (180 aa)) are Virion surface; in external conformation-facing. At 2–253 (GGWSSKPRQG…PGYRWMCLRR (252 aa)) the chain is on the intravirion; in internal conformation side. Trp-4 is a glycosylation site (N-linked (GlcNAc...) asparagine). The segment covering 96-106 (STNRQSGRQPT) has biased composition (polar residues). Positions 120 to 174 (MQWNSTTFHQALLDPRVRGLYFPAGGSSSGTVNPVPTTASPISSISSRTGDPAPN) are pre-S2. Residues 155-166 (PTTASPISSISS) show a composition bias toward low complexity. The chain crosses the membrane as a helical span at residues 182–202 (FLGPLLVLQAGFFLLTRILTI). The Intravirion; in external conformation portion of the chain corresponds to 203–253 (PQSLDSWWTSLNFLGGAPTCPGQNSQSPTSNHSPTSCPPICPGYRWMCLRR). Residues 254–274 (FIIFLFILLLCLIFLLVLLDY) form a helical membrane-spanning segment. At 275 to 348 (QGMLPVCPLL…GASVRFSWLS (74 aa)) the chain is on the virion surface side. Asn-320 is a glycosylation site (N-linked (GlcNAc...) asparagine; by host). A helical transmembrane segment spans residues 349-369 (LLVPFVQWFVGLSPTVWLSVI). The Intravirion portion of the chain corresponds to 370–375 (WMMWYW). The helical transmembrane segment at 376-398 (GPSLYNILSPFLPLLPIFFCLWV) threads the bilayer. Residues 399–400 (YI) lie on the Virion surface side of the membrane.

It belongs to the orthohepadnavirus major surface antigen family. As to quaternary structure, in its internal form (Li-HBsAg), interacts with the capsid protein and with the isoform S. Interacts with host chaperone CANX. Associates with host chaperone CANX through its pre-S2 N glycan; this association may be essential for isoform M proper secretion. In terms of assembly, interacts with isoform L. Interacts with the antigens of satellite virus HDV (HDVAgs); this interaction is required for encapsidation of HDV genomic RNA. Post-translationally, isoform M is N-terminally acetylated by host at a ratio of 90%, and N-glycosylated by host at the pre-S2 region. In terms of processing, myristoylated.

The protein localises to the virion membrane. Its function is as follows. The large envelope protein exists in two topological conformations, one which is termed 'external' or Le-HBsAg and the other 'internal' or Li-HBsAg. In its external conformation the protein attaches the virus to cell receptors and thereby initiating infection. This interaction determines the species specificity and liver tropism. This attachment induces virion internalization predominantly through caveolin-mediated endocytosis. The large envelope protein also assures fusion between virion membrane and endosomal membrane. In its internal conformation the protein plays a role in virion morphogenesis and mediates the contact with the nucleocapsid like a matrix protein. In terms of biological role, the middle envelope protein plays an important role in the budding of the virion. It is involved in the induction of budding in a nucleocapsid independent way. In this process the majority of envelope proteins bud to form subviral lipoprotein particles of 22 nm of diameter that do not contain a nucleocapsid. The chain is Large envelope protein from Hepatitis B virus genotype C subtype adr (strain Japan/adr4/1983) (HBV-C).